Consider the following 179-residue polypeptide: MGLEEKAGDLGIVTTTLEGVVNWGRTKAMWPMLFGLACCAIEMMAGQASNYDMSRFGLELMRASPRQADLMIVAGRVSRKMAPVLRRLYDQMPEPKWVVAMGDCASCGGVYNNYAIVQGVDEIVPVDVYVAGCPPRPEALIDGILQLHEKIKRDKITDHADGKPIRIEQAERGALKPLG.

The [4Fe-4S] cluster site is built by cysteine 38, cysteine 39, cysteine 104, and cysteine 133.

This sequence belongs to the complex I 20 kDa subunit family. As to quaternary structure, NDH-1 is composed of 14 different subunits. Subunits NuoB, C, D, E, F, and G constitute the peripheral sector of the complex. Requires [4Fe-4S] cluster as cofactor.

It is found in the cell membrane. It carries out the reaction a quinone + NADH + 5 H(+)(in) = a quinol + NAD(+) + 4 H(+)(out). NDH-1 shuttles electrons from NADH, via FMN and iron-sulfur (Fe-S) centers, to quinones in the respiratory chain. The immediate electron acceptor for the enzyme in this species is believed to be ubiquinone. Couples the redox reaction to proton translocation (for every two electrons transferred, four hydrogen ions are translocated across the cytoplasmic membrane), and thus conserves the redox energy in a proton gradient. This chain is NADH-quinone oxidoreductase subunit B 1, found in Herpetosiphon aurantiacus (strain ATCC 23779 / DSM 785 / 114-95).